A 289-amino-acid chain; its full sequence is Cbb3-type cytochrome c oxidase subunit FixP (289 aa).

Topologically, residues 1–33 (MADKHKHVDEVSGVETTGHEWDGIRELNNPLPR) are cytoplasmic. Residues 34 to 56 (WWVYSFYATIIWAIGYAVAYPSW) traverse the membrane as a helical segment. Topologically, residues 57–289 (PMLTEATKGV…VFVHSLGGGE (233 aa)) are periplasmic. Cytochrome c domains follow at residues 110-198 (FAVS…MSLT) and 205-286 (HLVE…HSLG). Residues C123, C126, H127, M175, C218, C221, H222, and M263 each contribute to the heme c site.

Belongs to the CcoP / FixP family. In terms of assembly, component of the cbb3-type cytochrome c oxidase at least composed of FixN, FixO, FixQ and FixP. Heme c serves as cofactor.

It is found in the cell inner membrane. It participates in energy metabolism; oxidative phosphorylation. Its function is as follows. C-type cytochrome. Part of the cbb3-type cytochrome c oxidase complex. FixP subunit is required for transferring electrons from donor cytochrome c via its heme groups to FixO subunit. From there, electrons are shuttled to the catalytic binuclear center of FixN subunit where oxygen reduction takes place. The complex also functions as a proton pump. The polypeptide is Cbb3-type cytochrome c oxidase subunit FixP (Sinorhizobium medicae (strain WSM419) (Ensifer medicae)).